The chain runs to 447 residues: Phosphoglucosamine mutase (447 aa).

S104 serves as the catalytic Phosphoserine intermediate. 4 residues coordinate Mg(2+): S104, D243, D245, and D247. S104 is modified (phosphoserine).

Belongs to the phosphohexose mutase family. Mg(2+) serves as cofactor. Activated by phosphorylation.

The enzyme catalyses alpha-D-glucosamine 1-phosphate = D-glucosamine 6-phosphate. Catalyzes the conversion of glucosamine-6-phosphate to glucosamine-1-phosphate. The polypeptide is Phosphoglucosamine mutase (Corynebacterium aurimucosum (strain ATCC 700975 / DSM 44827 / CIP 107346 / CN-1) (Corynebacterium nigricans)).